A 341-amino-acid chain; its full sequence is Cell division protein FtsX (341 aa).

A disordered region spans residues 1 to 34 (MSTTRTPKVSERVAPKPADPQPAKKKRGEDDDGP). Residues 1–65 (MSTTRTPKVS…RRLGKQPIGS (65 aa)) are Cytoplasmic-facing. Residues 66-86 (FFTCLVMAVALSMPMGLSLLL) traverse the membrane as a helical segment. At 87–212 (KNIEQLGGSW…LAAILKLGDR (126 aa)) the chain is on the periplasmic side. A helical transmembrane segment spans residues 213-233 (FVFGLAVMLISALLLVIGNTI). Residues 234-263 (RLHIENRRIEIEVIKLVGGTDAYVRRPFLY) are Cytoplasmic-facing. Residues 264–284 (MGALYGLGAGLLAWGILAFGL) form a helical membrane-spanning segment. Residues 285–311 (NWLNEAVVGLSGLYGSDFALGGVPASD) lie on the Periplasmic side of the membrane. The chain crosses the membrane as a helical span at residues 312-332 (GLSLLIGAVLLGYIGAWIAVA). The Cytoplasmic portion of the chain corresponds to 333–341 (RHLNELAPR).

Belongs to the ABC-4 integral membrane protein family. FtsX subfamily. As to quaternary structure, forms a membrane-associated complex with FtsE.

It localises to the cell inner membrane. Part of the ABC transporter FtsEX involved in cellular division. The chain is Cell division protein FtsX from Pseudomonas putida (Arthrobacter siderocapsulatus).